The following is a 346-amino-acid chain: Probable dual-specificity RNA methyltransferase RlmN (346 aa).

Residue E91 is the Proton acceptor of the active site. The 229-residue stretch at 97–325 (TEKRLTVCVS…VSVRYSKGLE (229 aa)) folds into the Radical SAM core domain. An intrachain disulfide couples C104 to C330. The [4Fe-4S] cluster site is built by C111, C115, and C118. S-adenosyl-L-methionine is bound by residues 158-159 (GE), S188, 211-213 (SLH), and N287. Catalysis depends on C330, which acts as the S-methylcysteine intermediate.

Belongs to the radical SAM superfamily. RlmN family. [4Fe-4S] cluster is required as a cofactor.

Its subcellular location is the cytoplasm. The catalysed reaction is adenosine(2503) in 23S rRNA + 2 reduced [2Fe-2S]-[ferredoxin] + 2 S-adenosyl-L-methionine = 2-methyladenosine(2503) in 23S rRNA + 5'-deoxyadenosine + L-methionine + 2 oxidized [2Fe-2S]-[ferredoxin] + S-adenosyl-L-homocysteine. It catalyses the reaction adenosine(37) in tRNA + 2 reduced [2Fe-2S]-[ferredoxin] + 2 S-adenosyl-L-methionine = 2-methyladenosine(37) in tRNA + 5'-deoxyadenosine + L-methionine + 2 oxidized [2Fe-2S]-[ferredoxin] + S-adenosyl-L-homocysteine. Functionally, specifically methylates position 2 of adenine 2503 in 23S rRNA and position 2 of adenine 37 in tRNAs. This is Probable dual-specificity RNA methyltransferase RlmN from Picosynechococcus sp. (strain ATCC 27264 / PCC 7002 / PR-6) (Agmenellum quadruplicatum).